The following is a 425-amino-acid chain: NAD kinase 2, mitochondrial (425 aa).

The N-terminal 45 residues, Met1 to Ala45, are a transit peptide targeting the mitochondrion. The tract at residues Gln20–Asp46 is disordered. Lys59 carries the N6-acetyllysine; alternate modification. N6-succinyllysine; alternate is present on Lys59. Phosphoserine is present on Ser171. An N6-succinyllysine modification is found at Lys285. Lys300 carries the post-translational modification N6-acetyllysine; alternate. Lys300 bears the N6-succinyllysine; alternate mark. Ser350 carries the post-translational modification Phosphoserine. Residue Lys380 is modified to N6-acetyllysine.

The protein belongs to the NAD kinase family. In terms of assembly, homodimer.

It localises to the mitochondrion. The enzyme catalyses NAD(+) + ATP = ADP + NADP(+) + H(+). Inhibited by NADH, NADPH and NADP(+). In terms of biological role, mitochondrial NAD(+) kinase that phosphorylates NAD(+) to yield NADP(+). Can use both ATP or inorganic polyphosphate as the phosphoryl donor. The protein is NAD kinase 2, mitochondrial (Nadk2) of Rattus norvegicus (Rat).